A 343-amino-acid chain; its full sequence is Ribosomal RNA small subunit methyltransferase, chloroplastic (343 aa).

A chloroplast-targeting transit peptide spans 1–48 (MMNAVITSATINCNSLSPSWTCGDNSPSKLLLGEISAALSRRRTVKVS). Residues His-78, Met-80, Gly-105, Glu-126, Asp-151, and Asn-183 each coordinate S-adenosyl-L-methionine.

The protein belongs to the class I-like SAM-binding methyltransferase superfamily. rRNA adenine N(6)-methyltransferase family.

The protein resides in the plastid. Its subcellular location is the chloroplast. In terms of biological role, required for methylation of the 3' adenosines in the small subunit of plastid rRNA. Essential for chloroplast biogenesis at low temperatures. This Arabidopsis thaliana (Mouse-ear cress) protein is Ribosomal RNA small subunit methyltransferase, chloroplastic.